We begin with the raw amino-acid sequence, 243 residues long: Small ribosomal subunit protein eS4 (243 aa).

The 63-residue stretch at 43–105 (IPLLYIVRDY…TGEHYRVLPN (63 aa)) folds into the S4 RNA-binding domain.

This sequence belongs to the eukaryotic ribosomal protein eS4 family.

This is Small ribosomal subunit protein eS4 (rps4e) from Pyrococcus horikoshii (strain ATCC 700860 / DSM 12428 / JCM 9974 / NBRC 100139 / OT-3).